The chain runs to 472 residues: Aspartyl/glutamyl-tRNA(Asn/Gln) amidotransferase subunit B (472 aa).

Belongs to the GatB/GatE family. GatB subfamily. In terms of assembly, heterotrimer of A, B and C subunits.

The enzyme catalyses L-glutamyl-tRNA(Gln) + L-glutamine + ATP + H2O = L-glutaminyl-tRNA(Gln) + L-glutamate + ADP + phosphate + H(+). The catalysed reaction is L-aspartyl-tRNA(Asn) + L-glutamine + ATP + H2O = L-asparaginyl-tRNA(Asn) + L-glutamate + ADP + phosphate + 2 H(+). Functionally, allows the formation of correctly charged Asn-tRNA(Asn) or Gln-tRNA(Gln) through the transamidation of misacylated Asp-tRNA(Asn) or Glu-tRNA(Gln) in organisms which lack either or both of asparaginyl-tRNA or glutaminyl-tRNA synthetases. The reaction takes place in the presence of glutamine and ATP through an activated phospho-Asp-tRNA(Asn) or phospho-Glu-tRNA(Gln). This Campylobacter jejuni subsp. jejuni serotype O:23/36 (strain 81-176) protein is Aspartyl/glutamyl-tRNA(Asn/Gln) amidotransferase subunit B.